Consider the following 591-residue polypeptide: MIVLPNKVRIFINDRMKKDIYLGISNFGFENDIDEILGIAHLLEHLLISFDSTIFLANASTSRSYMSFWCKSINSATESDAIRTLVSWFFSNGKLKDNFSLSSIRFHIKELENEYYFRNEVFHCMDILTFLSGGDLYNGGRIDMIDNLNIVRDMLVNRMQRISGSNIVIFVKRLGPGTLDFFNQTFGSLPACPEIIPSSIPVSTNGKIVMTPSPFYTVMVKINPTLDNILGILYLYETYHLIDYETIGNQLYLTVSFIDETEYESFLRGEAILQISQCQRINMNYSDDYMMNIYLNFPWLSHDLYDYITRINDDSKSILISLTNEIYTSIINRDIIVIYPNFSKAMCNTRDTQQHPIVVLDATNDGLIKKPYRSIPLMKRLTSNEIFIRYGDASLMDMITLSLSKQDISLKRNAEGIRVKHSFSADDIQAIMESDSFLKYSRSKPAAMYQYIFLSFFASGNSIDDILTNRDSTLEFSKKTKSKILFGRNARYDVTTKSSFVCGIVRGKLLDKTSLVEMMWDLKKKGLIYSMEFTNLLSKNTFYLFTFTIYTDEVYDYLNTNKLFPAKCLVISTKGDVENFSSLKKDVVIRV.

H41 contacts Zn(2+). E44 is a catalytic residue. Residues H45 and E112 each contribute to the Zn(2+) site.

It belongs to the peptidase M44 family. Zn(2+) serves as cofactor. In terms of processing, undergoes proteolytic processing during the course of infection. May be cleaved into 46 kDa and 22 kDa products (Potential).

It localises to the virion. Functionally, probably involved in maturation of some viral proteins by processing them preferentially at Ala-Gly-|-Ser/Thr/Lys motifs. Does not seem to be responsible for the cleavage of major core proteins. This Homo sapiens (Human) protein is Metalloendopeptidase OPG085 (OPG085).